The following is a 103-amino-acid chain: Small ribosomal subunit protein uS10 (103 aa).

This sequence belongs to the universal ribosomal protein uS10 family. In terms of assembly, part of the 30S ribosomal subunit.

Involved in the binding of tRNA to the ribosomes. This Burkholderia mallei (strain NCTC 10247) protein is Small ribosomal subunit protein uS10.